Consider the following 481-residue polypeptide: Proline--tRNA ligase (481 aa).

This sequence belongs to the class-II aminoacyl-tRNA synthetase family. ProS type 3 subfamily. As to quaternary structure, homodimer.

The protein resides in the cytoplasm. The catalysed reaction is tRNA(Pro) + L-proline + ATP = L-prolyl-tRNA(Pro) + AMP + diphosphate. Functionally, catalyzes the attachment of proline to tRNA(Pro) in a two-step reaction: proline is first activated by ATP to form Pro-AMP and then transferred to the acceptor end of tRNA(Pro). This Chlorobium phaeovibrioides (strain DSM 265 / 1930) (Prosthecochloris vibrioformis (strain DSM 265)) protein is Proline--tRNA ligase.